A 231-amino-acid chain; its full sequence is Orotate phosphoribosyltransferase (231 aa).

5-phospho-alpha-D-ribose 1-diphosphate contacts are provided by residues K27, 79–80, R106, K107, K110, H112, and 133–141; these read YK and DDVMTAGTA. The orotate site is built by T137 and R166.

Belongs to the purine/pyrimidine phosphoribosyltransferase family. PyrE subfamily. In terms of assembly, homodimer. It depends on Mg(2+) as a cofactor.

It catalyses the reaction orotidine 5'-phosphate + diphosphate = orotate + 5-phospho-alpha-D-ribose 1-diphosphate. The protein operates within pyrimidine metabolism; UMP biosynthesis via de novo pathway; UMP from orotate: step 1/2. Catalyzes the transfer of a ribosyl phosphate group from 5-phosphoribose 1-diphosphate to orotate, leading to the formation of orotidine monophosphate (OMP). The sequence is that of Orotate phosphoribosyltransferase from Bifidobacterium longum (strain NCC 2705).